Consider the following 108-residue polypeptide: uncharacterized protein (108 aa).

A run of 3 helical transmembrane segments spans residues Ile4–Met24, Gly46–Gly66, and Ile81–Leu101.

It is found in the cell membrane. This is an uncharacterized protein from Escherichia coli O157:H7.